The chain runs to 663 residues: Transketolase 2 (663 aa).

Substrate is bound at residue His25. Thiamine diphosphate is bound by residues His65 and 113–115; that span reads GPL. Asp154 contributes to the Mg(2+) binding site. Residues Gly155 and Asn184 each contribute to the thiamine diphosphate site. Mg(2+) is bound by residues Asn184 and Ile186. Substrate-binding residues include His259, Arg356, and Ser383. His259 is a binding site for thiamine diphosphate. The Proton donor role is filled by Glu410. Phe436 is a thiamine diphosphate binding site. His460, Asp468, and Arg519 together coordinate substrate.

It belongs to the transketolase family. Homodimer. The cofactor is Mg(2+). It depends on Ca(2+) as a cofactor. Requires Mn(2+) as cofactor. Co(2+) is required as a cofactor. Thiamine diphosphate serves as cofactor.

The enzyme catalyses D-sedoheptulose 7-phosphate + D-glyceraldehyde 3-phosphate = aldehydo-D-ribose 5-phosphate + D-xylulose 5-phosphate. In terms of biological role, catalyzes the transfer of a two-carbon ketol group from a ketose donor to an aldose acceptor, via a covalent intermediate with the cofactor thiamine pyrophosphate. In Vibrio parahaemolyticus serotype O3:K6 (strain RIMD 2210633), this protein is Transketolase 2 (tkt2).